The sequence spans 379 residues: Queuine tRNA-ribosyltransferase (379 aa).

The active-site Proton acceptor is the D94. Substrate contacts are provided by residues 94 to 98, D148, Q191, and G218; that span reads DSGGF. The segment at 249–255 is RNA binding; the sequence is GVGSPDS. Catalysis depends on D268, which acts as the Nucleophile. An RNA binding; important for wobble base 34 recognition region spans residues 273–277; the sequence is TRIAR. Positions 306, 308, 311, and 337 each coordinate Zn(2+).

It belongs to the queuine tRNA-ribosyltransferase family. Homodimer. Within each dimer, one monomer is responsible for RNA recognition and catalysis, while the other monomer binds to the replacement base PreQ1. The cofactor is Zn(2+).

It carries out the reaction 7-aminomethyl-7-carbaguanine + guanosine(34) in tRNA = 7-aminomethyl-7-carbaguanosine(34) in tRNA + guanine. The protein operates within tRNA modification; tRNA-queuosine biosynthesis. Catalyzes the base-exchange of a guanine (G) residue with the queuine precursor 7-aminomethyl-7-deazaguanine (PreQ1) at position 34 (anticodon wobble position) in tRNAs with GU(N) anticodons (tRNA-Asp, -Asn, -His and -Tyr). Catalysis occurs through a double-displacement mechanism. The nucleophile active site attacks the C1' of nucleotide 34 to detach the guanine base from the RNA, forming a covalent enzyme-RNA intermediate. The proton acceptor active site deprotonates the incoming PreQ1, allowing a nucleophilic attack on the C1' of the ribose to form the product. After dissociation, two additional enzymatic reactions on the tRNA convert PreQ1 to queuine (Q), resulting in the hypermodified nucleoside queuosine (7-(((4,5-cis-dihydroxy-2-cyclopenten-1-yl)amino)methyl)-7-deazaguanosine). The polypeptide is Queuine tRNA-ribosyltransferase (Listeria innocua serovar 6a (strain ATCC BAA-680 / CLIP 11262)).